The following is a 779-amino-acid chain: Endonuclease MutS2 (779 aa).

328–335 (GPNTGGKT) is an ATP binding site. One can recognise a Smr domain in the interval 704-779 (LDLRGKRYEE…GSGATIVTLG (76 aa)).

It belongs to the DNA mismatch repair MutS family. MutS2 subfamily. In terms of assembly, homodimer. Binds to stalled ribosomes, contacting rRNA.

Its function is as follows. Endonuclease that is involved in the suppression of homologous recombination and thus may have a key role in the control of bacterial genetic diversity. Acts as a ribosome collision sensor, splitting the ribosome into its 2 subunits. Detects stalled/collided 70S ribosomes which it binds and splits by an ATP-hydrolysis driven conformational change. Acts upstream of the ribosome quality control system (RQC), a ribosome-associated complex that mediates the extraction of incompletely synthesized nascent chains from stalled ribosomes and their subsequent degradation. Probably generates substrates for RQC. The chain is Endonuclease MutS2 from Streptococcus pyogenes serotype M49 (strain NZ131).